The chain runs to 239 residues: Ribonuclease PH (239 aa).

Phosphate is bound by residues Arg86 and 124–126; that span reads GTR.

The protein belongs to the RNase PH family. Homohexameric ring arranged as a trimer of dimers.

It carries out the reaction tRNA(n+1) + phosphate = tRNA(n) + a ribonucleoside 5'-diphosphate. Its function is as follows. Phosphorolytic 3'-5' exoribonuclease that plays an important role in tRNA 3'-end maturation. Removes nucleotide residues following the 3'-CCA terminus of tRNAs; can also add nucleotides to the ends of RNA molecules by using nucleoside diphosphates as substrates, but this may not be physiologically important. Probably plays a role in initiation of 16S rRNA degradation (leading to ribosome degradation) during starvation. This Rickettsia akari (strain Hartford) protein is Ribonuclease PH.